The following is a 726-amino-acid chain: MSTTDDTHNTLSTGKCPFHQGGHDRSAGAGTASRDWWPNQLRVDLLNQHSNRSNPLGEDFDYRKEFSKLDYSALKGDLKALLTDSQPWWPADWGSYVGLFIRMAWHGAGTYRSIDGRGGAGRGQQRFAPLNSWPDNVSLDKARRLLWPIKQKYGQKISWADLFILAGNVALENSGFRTFGFGAGREDVWEPDLDVNWGDEKAWLTHRHPEALAKAPLGATEMGLIYVNPEGPDHSGEPLSAAAAIRATFGNMGMNDEETVALIAGGHTLGKTHGAAAASHVGADPEAAPIEAQGLGWASSYGSGVGADAITSGLEVVWTQTPTQWSNYFFENLFKYEWVQTRSPAGAIQFEAVDAPDIIPDPFDPSKKRKPTMLVTDLTLRFDPEFEKISRRFLNDPQAFNEAFARAWFKLTHRDMGPKARYIGPEVPKEDLIWQDPLPQPLYQPTQEDIINLKAAIAASGLSISEMVSVAWASASTFRGGDKRGGANGARLALAPQRDWEVNAVAARVLPVLEEIQKTTNKASLADIIVLAGVVGIEQAAAAAGVSISVPFAPGRVDARQDQTDIEMFSLLEPIADGFRNYRARLDVSTTESLLIDKAQQLTLTAPEMTVLVGGMRVLGTNFDGSQNGVFTDRPGVLSTDFFANLLDMRYEWKPTDDANELFEGRDRLTGEVKYTATRADLVFGSNSVLRALAEVYACSDAHEKFVKDFVAAWVKVMNLDRFDLL.

The tract at residues 1-33 (MSTTDDTHNTLSTGKCPFHQGGHDRSAGAGTAS) is disordered. The tryptophyl-tyrosyl-methioninium (Trp-Tyr) (with M-252) cross-link spans 105–226 (WHGAGTYRSI…LGATEMGLIY (122 aa)). Histidine 106 serves as the catalytic Proton acceptor. The segment at residues 226-252 (YVNPEGPDHSGEPLSAAAAIRATFGNM) is a cross-link (tryptophyl-tyrosyl-methioninium (Tyr-Met) (with W-105)). Histidine 267 contacts heme b.

The protein belongs to the peroxidase family. Peroxidase/catalase subfamily. As to quaternary structure, homodimer or homotetramer. Heme b is required as a cofactor. Formation of the three residue Trp-Tyr-Met cross-link is important for the catalase, but not the peroxidase activity of the enzyme.

It carries out the reaction H2O2 + AH2 = A + 2 H2O. The enzyme catalyses 2 H2O2 = O2 + 2 H2O. Its function is as follows. Bifunctional enzyme with both catalase and broad-spectrum peroxidase activity. The protein is Catalase-peroxidase of Salmonella schwarzengrund (strain CVM19633).